Consider the following 326-residue polypeptide: D-alanine--D-alanine ligase (326 aa).

The ATP-grasp domain maps to 121–320 (ISVLRPYGIK…LKDLFGSTIE (200 aa)). ATP is bound at residue 149 to 204 (VDKVGLPCFVKANRAGSSFGVTKVKTEDEIISAAKTAFTEDDEAIIESFLDGTEVS). Mg(2+) contacts are provided by Glu-275, Glu-287, and Asn-289.

Belongs to the D-alanine--D-alanine ligase family. Requires Mg(2+) as cofactor. It depends on Mn(2+) as a cofactor.

It is found in the cytoplasm. It carries out the reaction 2 D-alanine + ATP = D-alanyl-D-alanine + ADP + phosphate + H(+). The protein operates within cell wall biogenesis; peptidoglycan biosynthesis. Cell wall formation. This chain is D-alanine--D-alanine ligase, found in Christiangramia forsetii (strain DSM 17595 / CGMCC 1.15422 / KT0803) (Gramella forsetii).